Consider the following 499-residue polypeptide: 2,3-bisphosphoglycerate-independent phosphoglycerate mutase (499 aa).

Positions 10 and 60 each coordinate Mn(2+). The active-site Phosphoserine intermediate is the S60. Substrate contacts are provided by residues H121, 151–152, R182, R188, 253–256, and K326; these read RD and RPDR. Mn(2+) is bound by residues D391, H395, D434, H435, and H452.

It belongs to the BPG-independent phosphoglycerate mutase family. In terms of assembly, monomer. Requires Mn(2+) as cofactor.

The enzyme catalyses (2R)-2-phosphoglycerate = (2R)-3-phosphoglycerate. Its pathway is carbohydrate degradation; glycolysis; pyruvate from D-glyceraldehyde 3-phosphate: step 3/5. In terms of biological role, catalyzes the interconversion of 2-phosphoglycerate and 3-phosphoglycerate. In Metamycoplasma hominis (strain ATCC 23114 / DSM 25592 / NBRC 14850 / NCTC 10111 / PG21) (Mycoplasma hominis), this protein is 2,3-bisphosphoglycerate-independent phosphoglycerate mutase.